Consider the following 423-residue polypeptide: GTPase HflX (423 aa).

The region spanning 201–363 (IQLALVGYTN…KIEQALKGMM (163 aa)) is the Hflx-type G domain. GTP is bound by residues 207 to 214 (GYTNAGKS), 232 to 236 (FATLD), 254 to 257 (DTVG), 320 to 323 (NKAD), and 341 to 343 (SAY). Mg(2+) contacts are provided by Ser214 and Thr234.

The protein belongs to the TRAFAC class OBG-HflX-like GTPase superfamily. HflX GTPase family. In terms of assembly, monomer. Associates with the 50S ribosomal subunit. Requires Mg(2+) as cofactor.

It is found in the cytoplasm. Its function is as follows. GTPase that associates with the 50S ribosomal subunit and may have a role during protein synthesis or ribosome biogenesis. This is GTPase HflX from Alkalihalophilus pseudofirmus (strain ATCC BAA-2126 / JCM 17055 / OF4) (Bacillus pseudofirmus).